Reading from the N-terminus, the 282-residue chain is DNA-binding transcriptional repressor YiaJ (282 aa).

Basic and acidic residues predominate over residues 1 to 20 (MGKEVMGKKENEMAQEKERP). The disordered stretch occupies residues 1–21 (MGKEVMGKKENEMAQEKERPA). Residues 23-85 (SQSLFRGLML…PAAGSYRLTT (63 aa)) form the HTH iclR-type domain. The H-T-H motif DNA-binding region spans 45-64 (LAHLSELAGLNKSTVHRLLQ). Residues 100–272 (IIHIAAPHLE…AQAISNELGF (173 aa)) form the IclR-ED domain.

Its function is as follows. Negatively controls the transcription of the yiaKLMNOPQRS operon, which may be involved in the utilization of 2,3-diketo-L-gulonate. The chain is DNA-binding transcriptional repressor YiaJ (yiaJ) from Escherichia coli (strain K12).